Consider the following 224-residue polypeptide: Adenylate kinase (224 aa).

Residue 10-15 (GSGKST) participates in ATP binding. An NMP region spans residues 30 to 59 (ASGDIIRAEINKGNALGREMKKYIEKGDLL). AMP contacts are provided by residues serine 31, arginine 36, 57 to 59 (DLL), 83 to 86 (GYPR), and glutamine 90. The LID stretch occupies residues 124–161 (GRRICRQCGAVYHIKYNPSKVPGKCDICGGEVIQREDD). Arginine 125 is a binding site for ATP. Residues cysteine 128 and cysteine 131 each coordinate Zn(2+). Residue 134 to 135 (VY) participates in ATP binding. Zn(2+) contacts are provided by cysteine 148 and cysteine 151. AMP contacts are provided by arginine 158 and arginine 169. Residue glycine 197 coordinates ATP.

Belongs to the adenylate kinase family. Monomer.

It localises to the cytoplasm. The enzyme catalyses AMP + ATP = 2 ADP. It participates in purine metabolism; AMP biosynthesis via salvage pathway; AMP from ADP: step 1/1. Its function is as follows. Catalyzes the reversible transfer of the terminal phosphate group between ATP and AMP. Plays an important role in cellular energy homeostasis and in adenine nucleotide metabolism. This is Adenylate kinase from Thermococcus sibiricus (strain DSM 12597 / MM 739).